Consider the following 584-residue polypeptide: 2-succinyl-5-enolpyruvyl-6-hydroxy-3-cyclohexene-1-carboxylate synthase (584 aa).

It belongs to the TPP enzyme family. MenD subfamily. Homodimer. Requires Mg(2+) as cofactor. Mn(2+) is required as a cofactor. It depends on thiamine diphosphate as a cofactor.

It carries out the reaction isochorismate + 2-oxoglutarate + H(+) = 5-enolpyruvoyl-6-hydroxy-2-succinyl-cyclohex-3-ene-1-carboxylate + CO2. The protein operates within quinol/quinone metabolism; 1,4-dihydroxy-2-naphthoate biosynthesis; 1,4-dihydroxy-2-naphthoate from chorismate: step 2/7. It participates in quinol/quinone metabolism; menaquinone biosynthesis. Catalyzes the thiamine diphosphate-dependent decarboxylation of 2-oxoglutarate and the subsequent addition of the resulting succinic semialdehyde-thiamine pyrophosphate anion to isochorismate to yield 2-succinyl-5-enolpyruvyl-6-hydroxy-3-cyclohexene-1-carboxylate (SEPHCHC). This Bacillus cereus (strain ZK / E33L) protein is 2-succinyl-5-enolpyruvyl-6-hydroxy-3-cyclohexene-1-carboxylate synthase.